We begin with the raw amino-acid sequence, 414 residues long: uncharacterized protein (414 aa).

An N-terminal signal peptide occupies residues 1-18 (MLKRLMLASAILPVVSFA).

This is an uncharacterized protein from Aquifex aeolicus (strain VF5).